A 267-amino-acid chain; its full sequence is Orotidine 5'-phosphate decarboxylase (267 aa).

Substrate contacts are provided by residues Asp-38, 60–62 (KTH), 92–101 (DRKFADIGNT), Tyr-218, and Arg-236. Lys-94 acts as the Proton donor in catalysis.

Belongs to the OMP decarboxylase family.

The catalysed reaction is orotidine 5'-phosphate + H(+) = UMP + CO2. It functions in the pathway pyrimidine metabolism; UMP biosynthesis via de novo pathway; UMP from orotate: step 2/2. This is Orotidine 5'-phosphate decarboxylase (URA3) from Debaryomyces hansenii (strain ATCC 36239 / CBS 767 / BCRC 21394 / JCM 1990 / NBRC 0083 / IGC 2968) (Yeast).